Here is a 144-residue protein sequence, read N- to C-terminus: TSC22 domain family protein 1 (144 aa).

A leucine-zipper region spans residues 77–98; sequence LKEQIKELIEKNSQLEQENNLL. Residues 109 to 144 form a disordered region; that stretch reads QFQAQLQTGSPPATTQPQGSTQPPAQPASQGSGPTA.

This sequence belongs to the TSC-22/Dip/Bun family. Forms homodimers. Forms a heterodimer with TSC22D4/THG1. Interacts with histone H1-2. Interacts with GNL3.

Its subcellular location is the cytoplasm. It localises to the nucleus. The protein resides in the mitochondrion. Functionally, transcriptional repressor. Plays a role in the repression of hematopoietic precursor cell growth. Promotes IL2 deprivation-induced apoptosis in T-lymphocytes, via repression of TSC22D3/GILZ transcription and activation of the caspase cascade. Positively regulates cell death in response to TGFB3 during mammary gland involution. This Bathyergus suillus (Cape dune mole rat) protein is TSC22 domain family protein 1.